The sequence spans 357 residues: Popeye domain-containing protein 1 (357 aa).

At 1 to 38 the chain is on the extracellular side; sequence MDTTAISPLTPLGVIPDLKNATSVPFNETACENWKEIH. N-linked (GlcNAc...) asparagine glycosylation is found at Asn-20 and Asn-27. Residues 39-59 form a helical membrane-spanning segment; sequence HLVFHVANICFAAGLVIPTTL. Residues 60 to 62 are Cytoplasmic-facing; the sequence is NLH. A helical membrane pass occupies residues 63-83; sequence MIFLRGLLTVGCALFIIWATL. Residues 84–89 are Extracellular-facing; sequence YRCALD. The chain crosses the membrane as a helical span at residues 90–110; that stretch reads IMIWNSVFLVVNLLHFIYLVY. The Cytoplasmic segment spans residues 111–357; the sequence is KRRPIKIEKE…AEKLELQRLP (247 aa). The span at 309 to 323 shows a compositional bias: low complexity; it reads GTSSSSSLRPGRTSP. A disordered region spans residues 309 to 357; it reads GTSSSSSLRPGRTSPYLRTSAKMKPIEESVEDDVFEAPSAEKLELQRLP. Over residues 347–357 the composition is skewed to basic and acidic residues; sequence SAEKLELQRLP.

This sequence belongs to the popeye family. In terms of assembly, homodimer. Homodimerization requires the C-terminus cytoplasmic region. Expressed in the heart and skeletal muscle (at protein level). Isoform 1 and isoform 4: expressed in heart, muscle, brain, stomach, kidney, lung and spleen.

The protein resides in the lateral cell membrane. The protein localises to the cell junction. It localises to the tight junction. It is found in the membrane. Its subcellular location is the cell membrane. The protein resides in the sarcolemma. The protein localises to the caveola. Its function is as follows. Cell adhesion molecule involved in the establishment and/or maintenance of cell integrity. Involved in the formation and regulation of the tight junction (TJ) paracellular permeability barrier in epithelial cells. Induces primordial adhesive contact and aggregation of epithelial cells in a Ca(2+)-independent manner. Involved in epithelial movement during corneal sheet formation and regeneration. May play a role in VAMP3-mediated vesicular transport and recycling of receptor molecules. May play a role in the regulation of cell shape and movement by modulating the Rho-GTPase activity. May be involved in skeletal muscle and heart development as well as in the maintenance of heart function. May also be involved in striated muscle regeneration and in the regulation of cell spreading. The polypeptide is Popeye domain-containing protein 1 (POPDC1) (Gallus gallus (Chicken)).